The primary structure comprises 154 residues: uncharacterized protein (154 aa).

Transmembrane regions (helical) follow at residues 39-61 (LLIFGSIAIAYTVIYISGLFFAR), 65-87 (LPYIRKILEIGISVIFYFLVSLL), 94-113 (VESLLLLKTLFLVQTIRVFI), and 128-150 (LLINIFSILGGISFFIIKLSPFT).

It localises to the cell membrane. This is an uncharacterized protein from Aquifex aeolicus (strain VF5).